An 883-amino-acid chain; its full sequence is Translation initiation factor IF-2 (883 aa).

Disordered regions lie at residues 52–102 and 115–297; these read KGRD…VNVE and VEAE…PTQP. 2 stretches are compositionally biased toward basic and acidic residues: residues 115 to 179 and 204 to 237; these read VEAE…REAT and AAEK…ERAA. A compositionally biased stretch (low complexity) spans 239–248; the sequence is KTGATAPAAK. A compositionally biased stretch (basic residues) spans 265 to 275; the sequence is PGRRGGKKGGR. Over residues 276–285 the composition is skewed to low complexity; it reads RAASGGEAAK. Residues 383–550 form the tr-type G domain; that stretch reads PRPPVVTVMG…AILLQAELME (168 aa). The tract at residues 392–399 is G1; the sequence is GHVDHGKT. 392-399 serves as a coordination point for GTP; that stretch reads GHVDHGKT. Residues 417–421 form a G2 region; it reads GITQH. A G3 region spans residues 438–441; sequence DTPG. Residues 438 to 442 and 492 to 495 contribute to the GTP site; these read DTPGH and NKID. Positions 492 to 495 are G4; that stretch reads NKID. Residues 528–530 form a G5 region; it reads SAK.

This sequence belongs to the TRAFAC class translation factor GTPase superfamily. Classic translation factor GTPase family. IF-2 subfamily.

The protein resides in the cytoplasm. In terms of biological role, one of the essential components for the initiation of protein synthesis. Protects formylmethionyl-tRNA from spontaneous hydrolysis and promotes its binding to the 30S ribosomal subunits. Also involved in the hydrolysis of GTP during the formation of the 70S ribosomal complex. The sequence is that of Translation initiation factor IF-2 from Alkalilimnicola ehrlichii (strain ATCC BAA-1101 / DSM 17681 / MLHE-1).